Consider the following 201-residue polypeptide: Recombination protein RecR (201 aa).

A C4-type zinc finger spans residues 60 to 75; the sequence is CSVCGNVDTTDPCSIC. Residues 83 to 178 form the Toprim domain; the sequence is TTIIVVEDVA…KITRLAHGVP (96 aa).

Belongs to the RecR family.

Its function is as follows. May play a role in DNA repair. It seems to be involved in an RecBC-independent recombinational process of DNA repair. It may act with RecF and RecO. The sequence is that of Recombination protein RecR from Bartonella quintana (strain Toulouse) (Rochalimaea quintana).